The primary structure comprises 169 residues: Cilia- and flagella-associated protein 276 (169 aa).

2 disordered regions span residues Ser-26–Ser-45 and His-150–Thr-169. A compositionally biased stretch (polar residues) spans His-36–Ser-45. The span at Arg-160–Thr-169 shows a compositional bias: basic and acidic residues.

In terms of assembly, microtubule inner protein component of sperm flagellar doublet microtubules. As to expression, expressed in cerebrum, cerebellum, gastrocnemius muscle, spinal cord and lung tissues.

Its subcellular location is the cytoplasm. The protein localises to the cytoskeleton. The protein resides in the flagellum axoneme. It localises to the cilium axoneme. Functionally, microtubule inner protein (MIP) part of the dynein-decorated doublet microtubules (DMTs) in cilia axoneme, which is required for motile cilia beating. May play an important role for the maintenance of myelin-axon integrity. May affect intracellular Ca(2+) homeostasis. In Homo sapiens (Human), this protein is Cilia- and flagella-associated protein 276.